The primary structure comprises 103 residues: Histone H4 (103 aa).

Residues M1–G14 are compositionally biased toward gly residues. The tract at residues M1–R20 is disordered. S2 carries the N-acetylserine modification. K17 carries the post-translational modification N6-acetyllysine. A DNA-binding region spans residues K17–R21. K80 is subject to N6-methylated lysine.

It belongs to the histone H4 family. As to quaternary structure, the nucleosome is a histone octamer containing two molecules each of H2A, H2B, H3 and H4 assembled in one H3-H4 heterotetramer and two H2A-H2B heterodimers. The octamer wraps approximately 147 bp of DNA.

It localises to the nucleus. Its subcellular location is the chromosome. Functionally, core component of nucleosome. Nucleosomes wrap and compact DNA into chromatin, limiting DNA accessibility to the cellular machineries which require DNA as a template. Histones thereby play a central role in transcription regulation, DNA repair, DNA replication and chromosomal stability. DNA accessibility is regulated via a complex set of post-translational modifications of histones, also called histone code, and nucleosome remodeling. In Olisthodiscus luteus (Marine phytoflagellate), this protein is Histone H4.